A 258-amino-acid chain; its full sequence is Trans-aconitate 2-methyltransferase (258 aa).

It belongs to the methyltransferase superfamily. Tam family.

It is found in the cytoplasm. It catalyses the reaction trans-aconitate + S-adenosyl-L-methionine = (E)-3-(methoxycarbonyl)pent-2-enedioate + S-adenosyl-L-homocysteine. Its function is as follows. Catalyzes the S-adenosylmethionine monomethyl esterification of trans-aconitate. The protein is Trans-aconitate 2-methyltransferase of Acidovorax sp. (strain JS42).